We begin with the raw amino-acid sequence, 259 residues long: Triosephosphate isomerase (259 aa).

Position 10-12 (10-12) interacts with substrate; sequence NWK. The Electrophile role is filled by His100. Glu172 functions as the Proton acceptor in the catalytic mechanism. Residues Gly178, Ser218, and 239-240 contribute to the substrate site; that span reads GG.

It belongs to the triosephosphate isomerase family. Homodimer.

It is found in the cytoplasm. The enzyme catalyses D-glyceraldehyde 3-phosphate = dihydroxyacetone phosphate. It functions in the pathway carbohydrate biosynthesis; gluconeogenesis. The protein operates within carbohydrate degradation; glycolysis; D-glyceraldehyde 3-phosphate from glycerone phosphate: step 1/1. In terms of biological role, involved in the gluconeogenesis. Catalyzes stereospecifically the conversion of dihydroxyacetone phosphate (DHAP) to D-glyceraldehyde-3-phosphate (G3P). The polypeptide is Triosephosphate isomerase (Corynebacterium glutamicum (strain ATCC 13032 / DSM 20300 / JCM 1318 / BCRC 11384 / CCUG 27702 / LMG 3730 / NBRC 12168 / NCIMB 10025 / NRRL B-2784 / 534)).